Here is a 268-residue protein sequence, read N- to C-terminus: TATA-box-binding protein (268 aa).

Over residues 1-24 (MDSLTTHPATAQQARAFTSPSSLS) the composition is skewed to polar residues. Residues 1–86 (MDSLTTHPAT…TPAATPGASA (86 aa)) form a disordered region. Low complexity predominate over residues 50 to 86 (NGQSANGNVNGQQQGANAANGNGVMPATPAATPGASA). 2 consecutive repeat copies span residues 95–171 (LQNI…ARII) and 185–262 (IQNI…YPVL).

This sequence belongs to the TBP family. Belongs to the TFIID complex together with the TBP-associated factors (TAFs). Binds DNA as monomer.

The protein localises to the nucleus. In terms of biological role, general transcription factor that functions at the core of the DNA-binding multiprotein factor TFIID. Binding of TFIID to the TATA box is the initial transcriptional step of the pre-initiation complex (PIC), playing a role in the activation of eukaryotic genes transcribed by RNA polymerase II. The polypeptide is TATA-box-binding protein (tbpA) (Emericella nidulans (strain FGSC A4 / ATCC 38163 / CBS 112.46 / NRRL 194 / M139) (Aspergillus nidulans)).